Here is a 390-residue protein sequence, read N- to C-terminus: Putative glutamate--cysteine ligase 2 (390 aa).

Belongs to the glutamate--cysteine ligase type 2 family. YbdK subfamily.

The catalysed reaction is L-cysteine + L-glutamate + ATP = gamma-L-glutamyl-L-cysteine + ADP + phosphate + H(+). In terms of biological role, ATP-dependent carboxylate-amine ligase which exhibits weak glutamate--cysteine ligase activity. This chain is Putative glutamate--cysteine ligase 2, found in Chloroflexus aurantiacus (strain ATCC 29366 / DSM 635 / J-10-fl).